The sequence spans 743 residues: Phosphoribosylformylglycinamidine synthase subunit PurL (743 aa).

The active site involves H50. Positions 53 and 92 each coordinate ATP. E94 lines the Mg(2+) pocket. Substrate contacts are provided by residues 95-98 and R117; that span reads SHNH. H96 serves as the catalytic Proton acceptor. Position 118 (D118) interacts with Mg(2+). Q241 contacts substrate. A Mg(2+)-binding site is contributed by D269. A substrate-binding site is contributed by 313–315; it reads ESQ. Residues D494 and G531 each contribute to the ATP site. Mg(2+) is bound at residue N532. S534 is a substrate binding site.

This sequence belongs to the FGAMS family. In terms of assembly, monomer. Part of the FGAM synthase complex composed of 1 PurL, 1 PurQ and 2 PurS subunits.

It is found in the cytoplasm. The catalysed reaction is N(2)-formyl-N(1)-(5-phospho-beta-D-ribosyl)glycinamide + L-glutamine + ATP + H2O = 2-formamido-N(1)-(5-O-phospho-beta-D-ribosyl)acetamidine + L-glutamate + ADP + phosphate + H(+). It participates in purine metabolism; IMP biosynthesis via de novo pathway; 5-amino-1-(5-phospho-D-ribosyl)imidazole from N(2)-formyl-N(1)-(5-phospho-D-ribosyl)glycinamide: step 1/2. Part of the phosphoribosylformylglycinamidine synthase complex involved in the purines biosynthetic pathway. Catalyzes the ATP-dependent conversion of formylglycinamide ribonucleotide (FGAR) and glutamine to yield formylglycinamidine ribonucleotide (FGAM) and glutamate. The FGAM synthase complex is composed of three subunits. PurQ produces an ammonia molecule by converting glutamine to glutamate. PurL transfers the ammonia molecule to FGAR to form FGAM in an ATP-dependent manner. PurS interacts with PurQ and PurL and is thought to assist in the transfer of the ammonia molecule from PurQ to PurL. The polypeptide is Phosphoribosylformylglycinamidine synthase subunit PurL (Mesorhizobium japonicum (strain LMG 29417 / CECT 9101 / MAFF 303099) (Mesorhizobium loti (strain MAFF 303099))).